A 733-amino-acid polypeptide reads, in one-letter code: SWR1-complex protein 4 (733 aa).

2 disordered regions span residues 1 to 34 and 98 to 128; these read MTSHDVRDVLNLPSDHAGPRPSKKARTATPRPNL and PDGTVQDGSAEGQDSAATADNSADKPEDSSF. The 72-residue stretch at 146–217 folds into the SANT domain; sequence NTNLKHPDWT…DLKARYYEVA (72 aa). Residues 247–299 are a coiled coil; it reads KQEQNRKRFAENTLKRSSDEAREEEALLLEIKRIMARTERFNEERRELYNRLD. A compositionally biased stretch (low complexity) spans 371–384; that stretch reads AASRRESLAASSTA. Disordered regions lie at residues 371–488 and 564–733; these read AASR…GSGP and KKAE…KQKK. 4 stretches are compositionally biased toward basic and acidic residues: residues 387–423, 463–484, 564–589, and 610–653; these read NDHHEPPVREPPVRHERQESRSHHRNESRSERADRHG, PERRKLSEHEEQVYGVSHHDRL, KKAERERAAREAAEARGETVEKKGGE, and DDAK…KGEE. The segment covering 699–710 has biased composition (low complexity); it reads GSSSGAGASSGA.

It belongs to the SWC4 family. As to quaternary structure, component of the SWR1 chromatin-remodeling complex and of the NuA4 histone acetyltransferase complex.

The protein localises to the nucleus. In terms of biological role, component of the SWR1 complex which mediates the ATP-dependent exchange of histone H2A for the H2A variant H2A.Z leading to transcriptional regulation of selected genes by chromatin remodeling. Component of the NuA4 histone acetyltransferase complex which is involved in transcriptional activation of selected genes principally by acetylation of nucleosomal histone H4 and H2A. The NuA4 complex is also involved in DNA repair. In Neurospora crassa (strain ATCC 24698 / 74-OR23-1A / CBS 708.71 / DSM 1257 / FGSC 987), this protein is SWR1-complex protein 4 (crc-1).